We begin with the raw amino-acid sequence, 470 residues long: Cysteine--tRNA ligase (470 aa).

Position 31 (C31) interacts with Zn(2+). A 'HIGH' region motif is present at residues 33–43 (PTVYDYVHIGH). C209, H234, and E238 together coordinate Zn(2+). A 'KMSKS' region motif is present at residues 266 to 270 (KMSKS). K269 is a binding site for ATP.

It belongs to the class-I aminoacyl-tRNA synthetase family. The cofactor is Zn(2+).

Its subcellular location is the cytoplasm. The enzyme catalyses tRNA(Cys) + L-cysteine + ATP = L-cysteinyl-tRNA(Cys) + AMP + diphosphate. The sequence is that of Cysteine--tRNA ligase from Saccharolobus solfataricus (strain ATCC 35092 / DSM 1617 / JCM 11322 / P2) (Sulfolobus solfataricus).